The chain runs to 900 residues: Phosphoenolpyruvate carboxylase (900 aa).

Residues H140 and K568 contribute to the active site.

The protein belongs to the PEPCase type 1 family. It depends on Mg(2+) as a cofactor.

The catalysed reaction is oxaloacetate + phosphate = phosphoenolpyruvate + hydrogencarbonate. Functionally, forms oxaloacetate, a four-carbon dicarboxylic acid source for the tricarboxylic acid cycle. The protein is Phosphoenolpyruvate carboxylase of Neisseria gonorrhoeae (strain ATCC 700825 / FA 1090).